We begin with the raw amino-acid sequence, 332 residues long: dTDP-3,4-didehydro-2,6-dideoxy-alpha-D-glucose 3-reductase (332 aa).

C12 to R18 contacts NADP(+). R19 lines the substrate pocket. NADP(+) is bound by residues S37 to R38, Y58, L74, and H79. The Proton donor role is filled by K97. R165 and D177 together coordinate NADP(+). Substrate is bound by residues Y235 and T255.

This sequence belongs to the Gfo/Idh/MocA family. In terms of assembly, monomer.

It catalyses the reaction dTDP-4-dehydro-2,6-dideoxy-alpha-D-glucose + NADP(+) = dTDP-3,4-didehydro-2,6-dideoxy-alpha-D-glucose + NADPH + H(+). Its function is as follows. Involved in the biosynthesis of forosamine ((4-dimethylamino)-2,3,4,6-tetradeoxy-alpha-D-threo-hexopyranose), a highly deoxygenated sugar component of several bioactive natural products such as the insecticidal spinosyns A and D. Catalyzes the reduction of the C-3 keto moiety of dTDP-3,4-diketo-2,6-dideoxy-alpha-D-glucose to yield dTDP-4-keto-2,6-dideoxy-alpha-D-glucose. NADPH is the better reductant, however NADH can also be used. This is dTDP-3,4-didehydro-2,6-dideoxy-alpha-D-glucose 3-reductase from Saccharopolyspora spinosa.